Consider the following 161-residue polypeptide: Nucleotide-binding protein XCV3791 (161 aa).

It belongs to the YajQ family.

Its function is as follows. Nucleotide-binding protein. The sequence is that of Nucleotide-binding protein XCV3791 from Xanthomonas euvesicatoria pv. vesicatoria (strain 85-10) (Xanthomonas campestris pv. vesicatoria).